A 100-amino-acid chain; its full sequence is Vesicle-associated membrane protein 8 (100 aa).

M1 is subject to N-acetylmethionine. Over 1–75 the chain is Cytoplasmic; the sequence is MEEASEGGGN…ARKFWWKNVK (75 aa). Phosphoserine is present on residues S5 and S18. A v-SNARE coiled-coil homology domain is found at 12 to 72; sequence RVRNLQSEVE…QKVARKFWWK (61 aa). Phosphothreonine is present on residues T28, T48, and T54. At S55 the chain carries Phosphoserine. 2 (Microbial infection) N6-stearoyl lysine lipidation sites follow: K64 and K68. A helical; Anchor for type IV membrane protein membrane pass occupies residues 76–96; that stretch reads MIVLICVIVFIIILFIVLFAT. At 97 to 100 the chain is on the vesicular side; sequence GAFS.

This sequence belongs to the synaptobrevin family. Forms a SNARE complex composed of VAMP8, SNAP29 and STX17 involved in fusion of autophagosome with lysosome. Found in a number of SNARE complexes with NAPA, SNAP23, SNAP25, STX1A, STX4, STX7, STX8 and VTI1B. Interacts with PICALM. SNARE complex formation and binding by PICALM are mutually exclusive processes for VAMP8. Interacts with SBF2/MTMR13. Interacts with RAB21 (in GTP-bound form) in response to starvation; the interaction probably regulates VAMP8 endolysosomal trafficking. Interacts with STX17; this interaction is increased in the absence of TMEM39A. Interacts with TRIM6. In terms of assembly, (Microbial infection) The interaction with STX17 is decreased in presence of SARS coronavirus-2/SARS-CoV-2 ORF3A protein. Post-translationally, (Microbial infection) Stearoylated By S.flexneri N-epsilon-fatty acyltransferase IcsB, thereby disrupting the host actin cytoskeleton. In terms of tissue distribution, platelets.

Its subcellular location is the lysosome membrane. The protein localises to the early endosome membrane. It localises to the late endosome membrane. The protein resides in the cell membrane. It is found in the zymogen granule membrane. In terms of biological role, SNAREs, soluble N-ethylmaleimide-sensitive factor-attachment protein receptors, are essential proteins for fusion of cellular membranes. SNAREs localized on opposing membranes assemble to form a trans-SNARE complex, an extended, parallel four alpha-helical bundle that drives membrane fusion. VAMP8 is a SNARE involved in autophagy through the direct control of autophagosome membrane fusion with the lysososome membrane via its interaction with the STX17-SNAP29 binary t-SNARE complex. Also required for dense-granule secretion in platelets. Also plays a role in regulated enzyme secretion in pancreatic acinar cells. Involved in the abscission of the midbody during cell division, which leads to completely separate daughter cells. Involved in the homotypic fusion of early and late endosomes. Also participates in the activation of type I interferon antiviral response through a TRIM6-dependent mechanism. This chain is Vesicle-associated membrane protein 8, found in Homo sapiens (Human).